Reading from the N-terminus, the 437-residue chain is tRNA-queuosine alpha-mannosyltransferase (437 aa).

Belongs to the glycosyltransferase group 1 family. Glycosyltransferase 4 subfamily.

It localises to the cytoplasm. The protein resides in the nucleus. The enzyme catalyses queuosine(34) in tRNA(Asp) + GDP-alpha-D-mannose = O-4''-alpha-D-mannosylqueuosine(34) in tRNA(Asp) + GDP + H(+). Its function is as follows. Glycosyltransferase that specifically catalyzes mannosylation of cytoplasmic tRNA(Asp) modified with queuosine at position 34 (queuosine(34)). Mannosylates the cyclopentene moiety of queuosine(34) in tRNA(Asp) to form mannosyl-queuosine(34). Mannosylation of queuosine(34) in tRNA(Asp) is required to slow-down elongation at cognate codons, GAC and GAU, thereby regulating protein translation. In Xenopus laevis (African clawed frog), this protein is tRNA-queuosine alpha-mannosyltransferase (gtdc1).